Reading from the N-terminus, the 154-residue chain is Myoglobin (154 aa).

The Globin domain maps to 2–148 (GLSDGEWQLV…FRNDMAAKYK (147 aa)). Phosphoserine is present on serine 4. Histidine 65 is a nitrite binding site. Histidine 65 contributes to the O2 binding site. Residue threonine 68 is modified to Phosphothreonine. Residue histidine 94 coordinates heme b.

This sequence belongs to the globin family. Monomeric.

Its subcellular location is the cytoplasm. It localises to the sarcoplasm. It carries out the reaction Fe(III)-heme b-[protein] + nitric oxide + H2O = Fe(II)-heme b-[protein] + nitrite + 2 H(+). The enzyme catalyses H2O2 + AH2 = A + 2 H2O. In terms of biological role, monomeric heme protein which primary function is to store oxygen and facilitate its diffusion within muscle tissues. Reversibly binds oxygen through a pentacoordinated heme iron and enables its timely and efficient release as needed during periods of heightened demand. Depending on the oxidative conditions of tissues and cells, and in addition to its ability to bind oxygen, it also has a nitrite reductase activity whereby it regulates the production of bioactive nitric oxide. Under stress conditions, like hypoxia and anoxia, it also protects cells against reactive oxygen species thanks to its pseudoperoxidase activity. This chain is Myoglobin (MB), found in Ochotona curzoniae (Black-lipped pika).